The chain runs to 31 residues: Alpha-conotoxin Li1.12 (31 aa).

Residues 1-15 (AGNAKMSALMALTIR) constitute a propeptide that is removed on maturation. 2 cysteine pairs are disulfide-bonded: C17–C23 and C18–C30. C30 bears the Cysteine amide mark.

It belongs to the conotoxin A superfamily. As to expression, expressed by the venom duct.

The protein localises to the secreted. Functionally, alpha-conotoxins act on postsynaptic membranes, they bind to the nicotinic acetylcholine receptors (nAChR) and thus inhibit them. This toxin inhibits alpha-3-beta-4, alpha-6/alpha-3-beta-4, and alpha-2-beta-4 nAChRs. The protein is Alpha-conotoxin Li1.12 of Conus lividus (Livid cone).